A 478-amino-acid chain; its full sequence is Ribulose bisphosphate carboxylase large chain (478 aa).

A propeptide spanning residues 1 to 2 (MS) is cleaved from the precursor. Proline 3 carries the N-acetylproline modification. Position 14 is an N6,N6,N6-trimethyllysine (lysine 14). Positions 123 and 173 each coordinate substrate. The active-site Proton acceptor is lysine 175. Lysine 177 is a substrate binding site. Mg(2+)-binding residues include lysine 201, aspartate 203, and glutamate 204. N6-carboxylysine is present on lysine 201. The active-site Proton acceptor is histidine 294. Substrate is bound by residues arginine 295, histidine 327, and serine 379.

It belongs to the RuBisCO large chain family. Type I subfamily. As to quaternary structure, heterohexadecamer of 8 large chains and 8 small chains; disulfide-linked. The disulfide link is formed within the large subunit homodimers. Requires Mg(2+) as cofactor. The disulfide bond which can form in the large chain dimeric partners within the hexadecamer appears to be associated with oxidative stress and protein turnover.

It localises to the plastid. Its subcellular location is the chloroplast. It carries out the reaction 2 (2R)-3-phosphoglycerate + 2 H(+) = D-ribulose 1,5-bisphosphate + CO2 + H2O. The catalysed reaction is D-ribulose 1,5-bisphosphate + O2 = 2-phosphoglycolate + (2R)-3-phosphoglycerate + 2 H(+). RuBisCO catalyzes two reactions: the carboxylation of D-ribulose 1,5-bisphosphate, the primary event in carbon dioxide fixation, as well as the oxidative fragmentation of the pentose substrate in the photorespiration process. Both reactions occur simultaneously and in competition at the same active site. The chain is Ribulose bisphosphate carboxylase large chain from Neurachne tenuifolia.